The following is a 345-amino-acid chain: Inositol phosphoceramide mannosyltransferase 2 (345 aa).

The chain crosses the membrane as a helical span at residues 4 to 24 (VIYKFAVFAAVNFFLMSSIVL). A glycan (N-linked (GlcNAc...) asparagine) is linked at asparagine 55. The helical transmembrane segment at 220-240 (YWLPYLTIMLSTGPLSISFLW) threads the bilayer. An N-linked (GlcNAc...) asparagine glycan is attached at asparagine 269. The helical transmembrane segment at 296-316 (LAYVIVAGFCLYFILSYMFFS) threads the bilayer.

This sequence belongs to the glycosyltransferase 32 family.

It localises to the golgi apparatus. It is found in the cis-Golgi network membrane. The protein resides in the trans-Golgi network membrane. In terms of biological role, with imt1 and imt3, is required for the synthesis of mannosyl phosphorylinositol ceramide (MIPC). Catalyzes the addition of mannosyl to phosphorylinositol ceramide (IPC). MIPC is essential for cell morphology, cell-surface distribution of ergosterol, localization for plasma-membrane transporters, and lipid-raft-mediated endocytosis of plasma membrane proteins to the vacuole. This is Inositol phosphoceramide mannosyltransferase 2 from Schizosaccharomyces pombe (strain 972 / ATCC 24843) (Fission yeast).